Here is a 311-residue protein sequence, read N- to C-terminus: Ribonuclease HIII (311 aa).

An RNase H type-2 domain is found at 95–311 (MSIVGSDEVG…NTEKAFRLLK (217 aa)). Residues D101, E102, and D206 each contribute to the a divalent metal cation site.

The protein belongs to the RNase HII family. RnhC subfamily. Mn(2+) serves as cofactor. It depends on Mg(2+) as a cofactor.

It is found in the cytoplasm. It catalyses the reaction Endonucleolytic cleavage to 5'-phosphomonoester.. Its function is as follows. Endonuclease that specifically degrades the RNA of RNA-DNA hybrids. This Bacillus anthracis (strain A0248) protein is Ribonuclease HIII.